The sequence spans 377 residues: Pseudouridylate synthase RPUSD4, mitochondrial (377 aa).

The disordered stretch occupies residues 51-70 (LRAQKQQQKTKEPAPTNPVQ). D153 is a catalytic residue.

It belongs to the pseudouridine synthase RluA family. Interacts with 16S mt-rRNA, mt-tRNA(Phe) and mt-tRNA(Met). Forms a regulatory protein-RNA complex, consisting of RCC1L, NGRN, RPUSD3, RPUSD4, TRUB2, FASTKD2 and 16S mt-rRNA.

The protein resides in the mitochondrion matrix. Its subcellular location is the nucleus. It is found in the cytoplasm. It carries out the reaction uridine in 5S rRNA = pseudouridine in 5S rRNA. The enzyme catalyses a uridine in tRNA = a pseudouridine in tRNA. The catalysed reaction is a uridine in mRNA = a pseudouridine in mRNA. Its function is as follows. Catalyzes uridine to pseudouridine isomerization (pseudouridylation) of different mitochondrial RNA substrates. Acts on position 1397 in 16S mitochondrial ribosomal RNA (16S mt-rRNA). This modification is required for the assembly of 16S mt-rRNA into a functional mitochondrial ribosome. As a component of a functional protein-RNA module, consisting of RCC1L, NGRN, RPUSD3, RPUSD4, TRUB2, FASTKD2 and 16S mt-rRNA, controls 16S mt-rRNA abundance and is required for intra-mitochondrial translation. Acts on position 39 in mitochondrial tRNA(Phe). Also catalyzes pseudouridylation of mRNAs in nucleus: acts as a regulator of pre-mRNA splicing by mediating pseudouridylation of pre-mRNAs at locations associated with alternatively spliced regions. Pseudouridylation of pre-mRNAs near splice sites directly regulates mRNA splicing and mRNA 3'-end processing. In Bos taurus (Bovine), this protein is Pseudouridylate synthase RPUSD4, mitochondrial.